We begin with the raw amino-acid sequence, 131 residues long: D-ribose pyranase (131 aa).

Residue histidine 20 is the Proton donor of the active site. Substrate contacts are provided by residues aspartate 28, histidine 98, and 120–122 (YSN).

It belongs to the RbsD / FucU family. RbsD subfamily. As to quaternary structure, homodecamer.

The protein localises to the cytoplasm. The enzyme catalyses beta-D-ribopyranose = beta-D-ribofuranose. It functions in the pathway carbohydrate metabolism; D-ribose degradation; D-ribose 5-phosphate from beta-D-ribopyranose: step 1/2. Functionally, catalyzes the interconversion of beta-pyran and beta-furan forms of D-ribose. This chain is D-ribose pyranase, found in Limosilactobacillus fermentum (strain NBRC 3956 / LMG 18251) (Lactobacillus fermentum).